The primary structure comprises 372 residues: N-acetyllactosaminide beta-1,3-N-acetylglucosaminyltransferase 3 (372 aa).

Residues 1 to 10 (MKYLRHRRPN) are Cytoplasmic-facing. The helical; Signal-anchor for type II membrane protein transmembrane segment at 11-31 (ATLILAIGAFTLLLFSLLVSP) threads the bilayer. Topologically, residues 32-372 (PTCKVQEQPP…LTCGNQTQIY (341 aa)) are lumenal. N-linked (GlcNAc...) asparagine glycans are attached at residues asparagine 64, asparagine 184, asparagine 202, asparagine 362, and asparagine 367.

The protein belongs to the glycosyltransferase 31 family. In terms of tissue distribution, expressed in colon, jejunum, stomach, esophagus, placenta and trachea.

It is found in the golgi apparatus membrane. The enzyme catalyses a 3-O-{beta-D-galactosyl-(1-&gt;3)-[N-acetyl-beta-D-glucosaminyl-(1-&gt;6)]-N-acetyl-alpha-D-galactosaminyl}-L-threonyl-[protein] + UDP-N-acetyl-alpha-D-glucosamine = 3-O-{beta-D-GlcNAc-(1-&gt;3)-beta-D-Gal-(1-&gt;3)-[beta-D-GlcNAc-(1-&gt;6)]-alpha-D-GalNAc}-L-threonyl-[protein] + UDP + H(+). It carries out the reaction 3-O-{beta-D-galactosyl-(1-&gt;3)-[N-acetyl-beta-D-glucosaminyl-(1-&gt;6)]-N-acetyl-alpha-D-galactosaminyl}-L-seryl-[protein] + UDP-N-acetyl-alpha-D-glucosamine = 3-O-{beta-D-GlcNAc-(1-&gt;3)-beta-D-Gal-(1-&gt;3)-[beta-D-GlcNAc-(1-&gt;6)]-alpha-D-GalNAc}-L-seryl-[protein] + UDP + H(+). The catalysed reaction is a beta-D-galactosyl-(1-&gt;4)-N-acetyl-beta-D-glucosaminyl derivative + UDP-N-acetyl-alpha-D-glucosamine = an N-acetyl-beta-D-glucosaminyl-(1-&gt;3)-beta-D-galactosyl-(1-&gt;4)-N-acetyl-beta-D-glucosaminyl derivative + UDP + H(+). The protein operates within protein modification; protein glycosylation. Functionally, beta-1,3-N-acetylglucosaminyltransferase involved in the synthesis of poly-N-acetyllactosamine. Has activity for type 2 oligosaccharides. Also acts as a core1-1,3-N-acetylglucosaminyltransferase (Core1-beta3GlcNAcT) to form the 6-sulfo sialyl Lewis x on extended core1 O-glycans. This Homo sapiens (Human) protein is N-acetyllactosaminide beta-1,3-N-acetylglucosaminyltransferase 3 (B3GNT3).